The primary structure comprises 410 residues: Elongation factor Tu, apicoplast (410 aa).

In terms of domain architecture, tr-type G spans 10–214 (KQHINLGTIG…QIIDNIIIPT (205 aa)). The segment at 19–26 (GHVDHGKT) is G1. Residue 19–26 (GHVDHGKT) coordinates GTP. Thr-26 lines the Mg(2+) pocket. The segment at 60 to 64 (GITIN) is G2. The tract at residues 81 to 84 (DCPG) is G3. Residues 81-85 (DCPGH) and 136-139 (NKED) each bind GTP. Residues 136-139 (NKED) are G4. The interval 174-176 (SAL) is G5.

It belongs to the TRAFAC class translation factor GTPase superfamily. Classic translation factor GTPase family. EF-Tu/EF-1A subfamily.

It is found in the plastid. It localises to the apicoplast. The catalysed reaction is GTP + H2O = GDP + phosphate + H(+). GTP hydrolase that promotes the GTP-dependent binding of aminoacyl-tRNA to the A-site of ribosomes during protein biosynthesis. This Plasmodium falciparum (isolate 3D7) protein is Elongation factor Tu, apicoplast (tufA).